Consider the following 157-residue polypeptide: Rieske domain-containing protein (157 aa).

Residue Met-1 is modified to N-acetylmethionine. Ser-6 is subject to Phosphoserine. Rieske domains follow at residues 16–94 (SSVC…TGEG) and 17–131 (SVCV…NIYV). [2Fe-2S] cluster-binding residues include Cys-57, His-59, Cys-80, and His-83.

Requires [2Fe-2S] cluster as cofactor.

In Homo sapiens (Human), this protein is Rieske domain-containing protein (RFESD).